A 232-amino-acid chain; its full sequence is Protein shisa-3 (232 aa).

The N-terminal stretch at 1–19 (MRLLGCFFLIFLTWGSARA) is a signal peptide. Over 20-93 (QGEYCHGWLD…GVSAQPVYVP (74 aa)) the chain is Lumenal. A helical transmembrane segment spans residues 94-114 (FLIVGSIFIAFIIVGSLVAVY). At 115-232 (CCTCLRPKQT…NKSCPDFRQS (118 aa)) the chain is on the cytoplasmic side. Residues 146 to 185 (TSGNLRTPSRQSSTATSSTSTGGSVRRLSSSRADPGYLVS) form a disordered region. A compositionally biased stretch (low complexity) spans 151-177 (RTPSRQSSTATSSTSTGGSVRRLSSSR).

It belongs to the shisa family. Interacts with fzd8 and fgfr1.

It localises to the endoplasmic reticulum membrane. In terms of biological role, plays an essential role in the maturation of presomitic mesoderm cells by individual attenuation of both fgf and wnt signaling. Regulates head and somite developmen. Inhibits both wnt and fgf signaling through the regulation of protein maturation and cell surface transportation of their receptors within the endoplasmic reticulum. The sequence is that of Protein shisa-3 (shisa3) from Xenopus laevis (African clawed frog).